The following is a 274-amino-acid chain: Phosphatidylglycerol--prolipoprotein diacylglyceryl transferase (274 aa).

Transmembrane regions (helical) follow at residues 24-44, 60-80, 96-116, and 122-142; these read WYALAYIVGLLGGWWYTRFLS, LLVWATLGTILGGRLGYVVFY, WHGGMSFHGGLVGVITATVLF, and LSVARVGDLVALVAPLGLFFG. Arg-143 contributes to the a 1,2-diacyl-sn-glycero-3-phospho-(1'-sn-glycerol) binding site. Transmembrane regions (helical) follow at residues 182 to 202, 207 to 227, and 241 to 261; these read ATLEGLVLFCLLGLLWRFTAL, GQIIGLFLIGYGLSRITAEFF, and VTMGQILSLPMILAGIVVFVV.

Belongs to the Lgt family.

Its subcellular location is the cell inner membrane. It carries out the reaction L-cysteinyl-[prolipoprotein] + a 1,2-diacyl-sn-glycero-3-phospho-(1'-sn-glycerol) = an S-1,2-diacyl-sn-glyceryl-L-cysteinyl-[prolipoprotein] + sn-glycerol 1-phosphate + H(+). It participates in protein modification; lipoprotein biosynthesis (diacylglyceryl transfer). Catalyzes the transfer of the diacylglyceryl group from phosphatidylglycerol to the sulfhydryl group of the N-terminal cysteine of a prolipoprotein, the first step in the formation of mature lipoproteins. The polypeptide is Phosphatidylglycerol--prolipoprotein diacylglyceryl transferase (Rhodospirillum rubrum (strain ATCC 11170 / ATH 1.1.1 / DSM 467 / LMG 4362 / NCIMB 8255 / S1)).